Here is a 99-residue protein sequence, read N- to C-terminus: Late cornified envelope protein 4A (99 aa).

The tract at residues 78–99 is disordered; it reads CYGSGSGQQSGGSGCCSGGGCC. Residues 81–99 show a composition bias toward gly residues; the sequence is SGSGQQSGGSGCCSGGGCC.

The protein belongs to the LCE family. Interacts with CYSRT1; the interaction is direct. In terms of tissue distribution, skin-specific. Expression was readily detected in adult trunk skin, adult arm skin, fetal skin, penal skin, vulva, esophagus and tongue. Not expressed in the cervix, rectum, lung, colon, or placenta.

Its function is as follows. Precursors of the cornified envelope of the stratum corneum. This is Late cornified envelope protein 4A (LCE4A) from Homo sapiens (Human).